Consider the following 694-residue polypeptide: Outer dynein arm-docking complex subunit 1 (694 aa).

2 coiled-coil regions span residues 27–192 (ELSR…RYLN) and 222–259 (REEA…HLEQ). Residues 271–290 (RQPDPGVVQKEEQRAWETSE) are disordered. A coiled-coil region spans residues 339 to 418 (NFINEQNSEL…EKIKTDIQVL (80 aa)). Disordered regions lie at residues 531 to 550 (QDEE…TLSS) and 571 to 694 (SILS…RGYN). S536, S542, S543, and S545 each carry phosphoserine. Residues 628 to 642 (TSSSSYLGSTGYLET) show a composition bias toward low complexity. A compositionally biased stretch (polar residues) spans 655–672 (SQSMGSEMSRGFSSGSGQ). Over residues 673–687 (TSSAAPASRPSSATS) the composition is skewed to low complexity.

Belongs to the ODA1/DCC2 family. Component of the outer dynein arm-docking complex along with ODAD2, ODAD3, ODAD4 and CLXN. Interacts with ODAD3. Interacts with ODAD4; this interaction may facilitate the recruitment and/or attachment of outer dynein arm docking complex proteins,including ODAD1, ODAD3, and ODAD4 to ciliary axonemes. Interacts with DNAH9. Interacts with MNS1. Interacts with PIERCE1 and PIERCE2; the interactions link the outer dynein arms docking complex (ODA-DC) to the internal microtubule inner proteins (MIP) in cilium axoneme.

It localises to the cytoplasm. It is found in the cytoskeleton. The protein resides in the cilium axoneme. Component of the outer dynein arm-docking complex that mediates outer dynein arms (ODA) binding onto the doublet microtubule. Involved in mediating assembly of both ODAs and their axonemal docking complex onto ciliary microtubules. This Rattus norvegicus (Rat) protein is Outer dynein arm-docking complex subunit 1 (Odad1).